Here is a 744-residue protein sequence, read N- to C-terminus: 5-methyltetrahydropteroyltriglutamate--homocysteine methyltransferase (744 aa).

Residues 17-20 (REVK) and K110 each bind 5-methyltetrahydropteroyltri-L-glutamate. Residues 422 to 424 (IGS) and E475 contribute to the L-homocysteine site. Residues 422-424 (IGS) and E475 contribute to the L-methionine site. W552 contributes to the 5-methyltetrahydropteroyltri-L-glutamate binding site. D590 serves as a coordination point for L-homocysteine. An L-methionine-binding site is contributed by D590. E596 provides a ligand contact to 5-methyltetrahydropteroyltri-L-glutamate. H632, C634, and E656 together coordinate Zn(2+). H685 (proton donor) is an active-site residue. C717 is a binding site for Zn(2+).

It belongs to the vitamin-B12 independent methionine synthase family. Zn(2+) serves as cofactor.

It carries out the reaction 5-methyltetrahydropteroyltri-L-glutamate + L-homocysteine = tetrahydropteroyltri-L-glutamate + L-methionine. Its pathway is amino-acid biosynthesis; L-methionine biosynthesis via de novo pathway; L-methionine from L-homocysteine (MetE route): step 1/1. Catalyzes the transfer of a methyl group from 5-methyltetrahydrofolate to homocysteine resulting in methionine formation. The sequence is that of 5-methyltetrahydropteroyltriglutamate--homocysteine methyltransferase from Trichodesmium erythraeum (strain IMS101).